The primary structure comprises 321 residues: Methionyl-tRNA formyltransferase (321 aa).

Position 112–115 (112–115) interacts with (6S)-5,6,7,8-tetrahydrofolate; the sequence is GLLP.

It belongs to the Fmt family.

The catalysed reaction is L-methionyl-tRNA(fMet) + (6R)-10-formyltetrahydrofolate = N-formyl-L-methionyl-tRNA(fMet) + (6S)-5,6,7,8-tetrahydrofolate + H(+). Attaches a formyl group to the free amino group of methionyl-tRNA(fMet). The formyl group appears to play a dual role in the initiator identity of N-formylmethionyl-tRNA by promoting its recognition by IF2 and preventing the misappropriation of this tRNA by the elongation apparatus. The protein is Methionyl-tRNA formyltransferase of Chlamydia caviae (strain ATCC VR-813 / DSM 19441 / 03DC25 / GPIC) (Chlamydophila caviae).